Consider the following 362-residue polypeptide: Heme A synthase (362 aa).

The next 5 membrane-spanning stretches (helical) occupy residues 11 to 31 (AAIRIWLSIVAGLIALMVLVG), 102 to 122 (VIGMVYLLPFLWFLWRGAVSG), 128 to 148 (LWLIFGLGALQGAVGWWMVAS), 159 to 179 (VRLATHLSLALLIFASIVWTL), and 198 to 218 (AWALVGVTFVQLYLGALVAGL). Residue His262 participates in heme binding. Helical transmembrane passes span 264–286 (MTAYTLLALAAWHAFDVMRAGAG), 297–317 (LAAILVQAVLGIATLLMVVPI), and 318–338 (SLALLHQGTALIVLTFAVLQA). Residue His323 coordinates heme.

Belongs to the COX15/CtaA family. Type 2 subfamily. As to quaternary structure, interacts with CtaB. Heme b serves as cofactor.

The protein resides in the cell membrane. It catalyses the reaction Fe(II)-heme o + 2 A + H2O = Fe(II)-heme a + 2 AH2. It participates in porphyrin-containing compound metabolism; heme A biosynthesis; heme A from heme O: step 1/1. Functionally, catalyzes the conversion of heme O to heme A by two successive hydroxylations of the methyl group at C8. The first hydroxylation forms heme I, the second hydroxylation results in an unstable dihydroxymethyl group, which spontaneously dehydrates, resulting in the formyl group of heme A. The sequence is that of Heme A synthase from Bradyrhizobium sp. (strain ORS 278).